Consider the following 316-residue polypeptide: tRNA dimethylallyltransferase (316 aa).

An ATP-binding site is contributed by glycine 17–threonine 24. Threonine 19 to threonine 24 provides a ligand contact to substrate. Interaction with substrate tRNA stretches follow at residues aspartate 42 to leucine 45, glutamine 166 to arginine 170, and arginine 247 to arginine 252.

Belongs to the IPP transferase family. In terms of assembly, monomer. Mg(2+) is required as a cofactor.

It catalyses the reaction adenosine(37) in tRNA + dimethylallyl diphosphate = N(6)-dimethylallyladenosine(37) in tRNA + diphosphate. In terms of biological role, catalyzes the transfer of a dimethylallyl group onto the adenine at position 37 in tRNAs that read codons beginning with uridine, leading to the formation of N6-(dimethylallyl)adenosine (i(6)A). In Salmonella enteritidis PT4 (strain P125109), this protein is tRNA dimethylallyltransferase.